A 140-amino-acid chain; its full sequence is Mercuric transport protein MerC (140 aa).

Over 2–10 the chain is Cytoplasmic; that stretch reads GLMTRIADK. Residues 11–31 form a helical membrane-spanning segment; it reads TGALGSVVSAMGCAACFPALA. Residues glycine 22 and alanine 25 each contribute to the Hg(2+) site. The Periplasmic portion of the chain corresponds to 32-46; it reads SFGAAIGLGFLSQYE. The helical transmembrane segment at 47–67 threads the bilayer; it reads GLFISRLLPLFAALAFLANAL. Residues 68–78 lie on the Cytoplasmic side of the membrane; the sequence is GWFSHRQWLRS. A helical transmembrane segment spans residues 79-99; the sequence is LLGMIGPAIVFAATVWLLGNW. Over 100–106 the chain is Periplasmic; sequence WTANLMY. The helical transmembrane segment at 107-127 threads the bilayer; sequence VGLALMIGVSIWDFVSPAHRR. Residues 128–140 lie on the Cytoplasmic side of the membrane; that stretch reads CGPDGCELPAKRL.

It is found in the cell inner membrane. Uptake of Hg(2+) is decreased by iodoacetamide and iodoacetate, and is completely inhibited by the thiol-modifying reagent N-ethylmaleimide (NEM). In terms of biological role, involved in mercuric ion uptake and binding. MerC-mediated Hg(2+) uptake does not require MerP. The sequence is that of Mercuric transport protein MerC from Shigella flexneri.